We begin with the raw amino-acid sequence, 288 residues long: Small ribosomal subunit protein uS2 (288 aa).

A disordered region spans residues 255–288 (ANNRDHKNNKNNSTIDNAENLKEENLVGGSNNES).

The protein belongs to the universal ribosomal protein uS2 family.

The sequence is that of Small ribosomal subunit protein uS2 from Ehrlichia chaffeensis (strain ATCC CRL-10679 / Arkansas).